A 339-amino-acid polypeptide reads, in one-letter code: ATPase GET3 (339 aa).

Position 34 to 41 (34 to 41) interacts with ATP; it reads KGGVGKTT. Asp-63 is a catalytic residue. Positions 243 and 270 each coordinate ATP. Residues Cys-281 and Cys-284 each contribute to the Zn(2+) site.

The protein belongs to the arsA ATPase family. In terms of assembly, homodimer.

Its subcellular location is the cytoplasm. It is found in the endoplasmic reticulum. Its function is as follows. ATPase required for the post-translational delivery of tail-anchored (TA) proteins to the endoplasmic reticulum. Recognizes and selectively binds the transmembrane domain of TA proteins in the cytosol. This complex then targets to the endoplasmic reticulum by membrane-bound receptors, where the tail-anchored protein is released for insertion. This process is regulated by ATP binding and hydrolysis. ATP binding drives the homodimer towards the closed dimer state, facilitating recognition of newly synthesized TA membrane proteins. ATP hydrolysis is required for insertion. Subsequently, the homodimer reverts towards the open dimer state, lowering its affinity for the membrane-bound receptor, and returning it to the cytosol to initiate a new round of targeting. The sequence is that of ATPase GET3 from Coccidioides immitis (strain RS) (Valley fever fungus).